The following is a 617-amino-acid chain: Ceramide transfer protein (617 aa).

The segment covering 1–11 (MSDNQSWNSSG) has biased composition (polar residues). The segment at 1-23 (MSDNQSWNSSGSEEDLEPESGPP) is disordered. Positions 23 to 117 (PVERCGVLSK…WIDSIEQHKS (95 aa)) constitute a PH domain. The stretch at 268-302 (REDSWQKRLDKEIEKRRRVEEAYKNAMTELKKKSH) forms a coiled coil. Residues 320-326 (EFFDAVE) carry the FFAT motif. The segment at 341-382 (EKGRSHWPPSPPSSEAHTAAGSHRLVQAPPSCPPPTDLVSSS) is disordered. The START domain maps to 383-611 (DEHRFRIQVE…FTSYVQEKTA (229 aa)). Positions 466, 487, 524, and 572 each coordinate an N-acylsphing-4-enine.

Its subcellular location is the cytoplasm. The protein localises to the golgi apparatus. It is found in the endoplasmic reticulum. The catalysed reaction is N-hexadecanoylsphing-4-enine(in) = N-hexadecanoylsphing-4-enine(out). In terms of biological role, may mediate the intracellular trafficking of ceramide in a non-vesicular manner. This is Ceramide transfer protein (cert1) from Xenopus laevis (African clawed frog).